The primary structure comprises 198 residues: ATP-dependent Clp protease proteolytic subunit 1 (198 aa).

Ser96 functions as the Nucleophile in the catalytic mechanism. His121 is an active-site residue.

It belongs to the peptidase S14 family. As to quaternary structure, fourteen ClpP subunits assemble into 2 heptameric rings which stack back to back to give a disk-like structure with a central cavity, resembling the structure of eukaryotic proteasomes.

The protein resides in the cytoplasm. The enzyme catalyses Hydrolysis of proteins to small peptides in the presence of ATP and magnesium. alpha-casein is the usual test substrate. In the absence of ATP, only oligopeptides shorter than five residues are hydrolyzed (such as succinyl-Leu-Tyr-|-NHMec, and Leu-Tyr-Leu-|-Tyr-Trp, in which cleavage of the -Tyr-|-Leu- and -Tyr-|-Trp bonds also occurs).. Functionally, cleaves peptides in various proteins in a process that requires ATP hydrolysis. Has a chymotrypsin-like activity. Plays a major role in the degradation of misfolded proteins. The chain is ATP-dependent Clp protease proteolytic subunit 1 from Synechocystis sp. (strain ATCC 27184 / PCC 6803 / Kazusa).